A 515-amino-acid chain; its full sequence is Cytochrome P450 monooxygenase paxP (515 aa).

A helical transmembrane segment spans residues 20–36 (SLLWKLGVFAVLVYFLL). Cys456 contacts heme.

Belongs to the cytochrome P450 family. It depends on heme as a cofactor.

It is found in the membrane. The protein operates within secondary metabolite biosynthesis. Cytochrome P450 monooxygenase; part of the ATM2 gene cluster that mediates the biosynthesis of paxilline, a mycotoxin that acts as an inhibitor of mammalian maxi-K channels. PaxG, the geranylgeranyl diphosphate (GGPP) synthase is proposed to catalyze the first step in paxilline biosynthesis. Condensation of indole-3-glycerol phosphate with GGPP by paxC then forms 3-geranylgeranylindole (3-GGI), followed by epoxidation and cyclization of this intermediate (by paxM and paxB) to form paspaline. Paspaline is subsequently converted to 13-desoxypaxilline by paxP, the latter being then converted to paxilline by paxQ. Finally paxilline can be mono- and di-prenylated by paxD. PaxP can also utilized beta-paxitriol and alpha-PC-M6 as substrates converting them to paxilline. This chain is Cytochrome P450 monooxygenase paxP, found in Penicillium paxilli.